The sequence spans 314 residues: Annexin-like protein RJ4 (314 aa).

4 Annexin repeats span residues Phe10–Leu81, Asp82–Thr153, Lys165–Arg236, and Asp240–Gly311. Ca(2+) contacts are provided by Gly25, Gly27, and Glu67. 5 residues coordinate Ca(2+): Ile253, Arg255, Gly257, Asp297, and Thr298.

The protein belongs to the annexin (TC 1.A.31.1) family. In terms of tissue distribution, predominantly in developing fruit.

This Fragaria ananassa (Strawberry) protein is Annexin-like protein RJ4.